The following is a 244-amino-acid chain: 15,16-dihydrobiliverdin:ferredoxin oxidoreductase (244 aa).

The protein belongs to the HY2 family.

The catalysed reaction is 15,16-dihydrobiliverdin + oxidized 2[4Fe-4S]-[ferredoxin] = biliverdin IXalpha + reduced 2[4Fe-4S]-[ferredoxin] + 2 H(+). In terms of biological role, catalyzes the two-electron reduction of biliverdin IX-alpha at the C15 methine bridge. This is 15,16-dihydrobiliverdin:ferredoxin oxidoreductase (pebA) from Nostoc punctiforme (strain ATCC 29133 / PCC 73102).